The following is a 44-amino-acid chain: Cuticle protein CP466 (44 aa).

2 tandem repeats follow at residues 3–20 (LLEG…KKYL) and 27–44 (VLLT…NVQF).

In terms of tissue distribution, calcified shell.

This chain is Cuticle protein CP466, found in Cancer pagurus (Rock crab).